The following is a 200-amino-acid chain: NADH-quinone oxidoreductase subunit C (200 aa).

It belongs to the complex I 30 kDa subunit family. NDH-1 is composed of 14 different subunits. Subunits NuoB, C, D, E, F, and G constitute the peripheral sector of the complex.

It localises to the cell inner membrane. The catalysed reaction is a quinone + NADH + 5 H(+)(in) = a quinol + NAD(+) + 4 H(+)(out). Its function is as follows. NDH-1 shuttles electrons from NADH, via FMN and iron-sulfur (Fe-S) centers, to quinones in the respiratory chain. The immediate electron acceptor for the enzyme in this species is believed to be ubiquinone. Couples the redox reaction to proton translocation (for every two electrons transferred, four hydrogen ions are translocated across the cytoplasmic membrane), and thus conserves the redox energy in a proton gradient. This Rhizobium leguminosarum bv. trifolii (strain WSM2304) protein is NADH-quinone oxidoreductase subunit C.